Reading from the N-terminus, the 211-residue chain is Histidine biosynthesis bifunctional protein HisIE (211 aa).

Positions 1–107 (MNKLIDFSKG…FNSEIESRFK (107 aa)) are phosphoribosyl-AMP cyclohydrolase. Positions 108–211 (IQALAQTIHQ…KGERKKVQEW (104 aa)) are phosphoribosyl-ATP pyrophosphohydrolase.

It in the N-terminal section; belongs to the PRA-CH family. This sequence in the C-terminal section; belongs to the PRA-PH family.

It is found in the cytoplasm. The enzyme catalyses 1-(5-phospho-beta-D-ribosyl)-ATP + H2O = 1-(5-phospho-beta-D-ribosyl)-5'-AMP + diphosphate + H(+). It catalyses the reaction 1-(5-phospho-beta-D-ribosyl)-5'-AMP + H2O = 1-(5-phospho-beta-D-ribosyl)-5-[(5-phospho-beta-D-ribosylamino)methylideneamino]imidazole-4-carboxamide. It participates in amino-acid biosynthesis; L-histidine biosynthesis; L-histidine from 5-phospho-alpha-D-ribose 1-diphosphate: step 2/9. The protein operates within amino-acid biosynthesis; L-histidine biosynthesis; L-histidine from 5-phospho-alpha-D-ribose 1-diphosphate: step 3/9. In Staphylococcus epidermidis (strain ATCC 12228 / FDA PCI 1200), this protein is Histidine biosynthesis bifunctional protein HisIE.